Here is a 298-residue protein sequence, read N- to C-terminus: Iron-regulated virulence regulatory protein IrgB (298 aa).

Positions 1-59 (MQDLSAVKAFHALCQHKSLTAAAKALEQPKSTLSRRLAQLEEDLGQSLLMRQGNRLTLT) constitute an HTH lysR-type domain. The H-T-H motif DNA-binding region spans 19–38 (LTAAAKALEQPKSTLSRRLA).

This sequence belongs to the LysR transcriptional regulatory family.

Functionally, transcription activation of the irgA gene. In the presence of sufficient iron, transcription of both irgA and irgB is negatively regulated by a fur-like protein. In low iron conditions, negative regulation of transcription is removed, and production of IrgB leads to positive transcriptional activation of irgA. The chain is Iron-regulated virulence regulatory protein IrgB (irgB) from Vibrio cholerae serotype O1 (strain ATCC 39541 / Classical Ogawa 395 / O395).